The sequence spans 256 residues: Cell division protein DivIB (256 aa).

Over 1-23 (MSKDLISTDEYIKIKKKRKRIKK) the chain is Cytoplasmic. The helical transmembrane segment at 24–44 (IVVLFIFLISILVTLCLKIPY) threads the bilayer. Residues 45–113 (FNIESIEIKG…NKLQIYVKER (69 aa)) enclose the POTRA domain. Residues 45–256 (FNIESIEIKG…EGNPVFYIEK (212 aa)) lie on the Extracellular side of the membrane.

Belongs to the FtsQ/DivIB family. DivIB subfamily.

The protein resides in the cell membrane. Cell division protein that may be involved in stabilizing or promoting the assembly of the division complex. In Clostridium botulinum (strain Hall / ATCC 3502 / NCTC 13319 / Type A), this protein is Cell division protein DivIB.